The primary structure comprises 430 residues: Adenylosuccinate synthetase (430 aa).

GTP is bound by residues 13–19 and 41–43; these read GDEGKGK and GHT. The active-site Proton acceptor is the D14. D14 and G41 together coordinate Mg(2+). IMP contacts are provided by residues 14-17, 39-42, T130, R144, Q225, T240, and R304; these read DEGK and NAGH. The active-site Proton donor is the H42. 300-306 contributes to the substrate binding site; sequence ASTGRPR. GTP contacts are provided by residues R306, 332–334, and 414–416; these read KLD and STG.

Belongs to the adenylosuccinate synthetase family. Homodimer. It depends on Mg(2+) as a cofactor.

Its subcellular location is the cytoplasm. It catalyses the reaction IMP + L-aspartate + GTP = N(6)-(1,2-dicarboxyethyl)-AMP + GDP + phosphate + 2 H(+). It functions in the pathway purine metabolism; AMP biosynthesis via de novo pathway; AMP from IMP: step 1/2. In terms of biological role, plays an important role in the de novo pathway of purine nucleotide biosynthesis. Catalyzes the first committed step in the biosynthesis of AMP from IMP. This is Adenylosuccinate synthetase from Xylella fastidiosa (strain M12).